The sequence spans 185 residues: MFFSNKTKEVKTIAKQDLFINDEIRVREVRLIGLEGEQLGIKPLSEAQALADNANVDLVLIQPQAKPPVAKIMDYGKFKFEYQKKQKEQRKKQSVVTVKEVRLSPTIDKGDFDTKLRNARKFLEKGNKVKVSIRFKGRMITHKEIGAKVLAEFAEATQDIAIIEQRAKMDGRQMFMQLAPATDKK.

Belongs to the IF-3 family. In terms of assembly, monomer.

The protein resides in the cytoplasm. IF-3 binds to the 30S ribosomal subunit and shifts the equilibrium between 70S ribosomes and their 50S and 30S subunits in favor of the free subunits, thus enhancing the availability of 30S subunits on which protein synthesis initiation begins. The sequence is that of Translation initiation factor IF-3 from Streptococcus pneumoniae (strain Hungary19A-6).